The chain runs to 1004 residues: Importin subunit beta-5 (1004 aa).

Residue Met1 is modified to N-acetylmethionine. Residues 21–100 (AETQLLQWCD…REVLLKLCLN (80 aa)) form the Importin N-terminal domain.

The protein belongs to the importin beta family. In terms of assembly, interacts with NAP1.

It localises to the cytoplasm. The protein resides in the nucleus. Its subcellular location is the nuclear pore complex. In terms of biological role, required for nuclear protein import and mediates docking of import substrate to distinct nucleoporins. Serves a receptor for nuclear localization signals. Mediates the nuclear import of TATA-binding protein (TBP) and of histones H2A and H2B. This is Importin subunit beta-5 (KAP114) from Saccharomyces cerevisiae (strain ATCC 204508 / S288c) (Baker's yeast).